Reading from the N-terminus, the 256-residue chain is Acetyl-coenzyme A carboxylase carboxyl transferase subunit alpha (256 aa).

The 236-residue stretch at 1–236 (MTKITRIVRE…KQELLVELEQ (236 aa)) folds into the CoA carboxyltransferase C-terminal domain.

The protein belongs to the AccA family. In terms of assembly, acetyl-CoA carboxylase is a heterohexamer composed of biotin carboxyl carrier protein (AccB), biotin carboxylase (AccC) and two subunits each of ACCase subunit alpha (AccA) and ACCase subunit beta (AccD).

It localises to the cytoplasm. It catalyses the reaction N(6)-carboxybiotinyl-L-lysyl-[protein] + acetyl-CoA = N(6)-biotinyl-L-lysyl-[protein] + malonyl-CoA. It functions in the pathway lipid metabolism; malonyl-CoA biosynthesis; malonyl-CoA from acetyl-CoA: step 1/1. Functionally, component of the acetyl coenzyme A carboxylase (ACC) complex. First, biotin carboxylase catalyzes the carboxylation of biotin on its carrier protein (BCCP) and then the CO(2) group is transferred by the carboxyltransferase to acetyl-CoA to form malonyl-CoA. This is Acetyl-coenzyme A carboxylase carboxyl transferase subunit alpha from Streptococcus gordonii (strain Challis / ATCC 35105 / BCRC 15272 / CH1 / DL1 / V288).